A 629-amino-acid polypeptide reads, in one-letter code: uncharacterized protein (629 aa).

Polar residues predominate over residues 1 to 11 (MSDDQQNGKQN). Disordered regions lie at residues 1–24 (MSDD…EQDD), 62–87 (SNNN…SNYN), 197–464 (SEES…SSLI), and 493–560 (PTPT…STPD). Low complexity predominate over residues 247-264 (PSSSSSSSSLINSPTTSK). Residues 274–288 (PTINPKSLFGLSSTI) are compositionally biased toward polar residues. A compositionally biased stretch (basic and acidic residues) spans 294-430 (VKTEKEKEKE…DETLNKETPH (137 aa)). Composition is skewed to low complexity over residues 434 to 464 (PHIT…SSLI) and 493 to 554 (PTPT…NNNN).

This is an uncharacterized protein from Dictyostelium discoideum (Social amoeba).